We begin with the raw amino-acid sequence, 499 residues long: Glutamyl-tRNA(Gln) amidotransferase subunit A (499 aa).

Active-site charge relay system residues include lysine 80 and serine 155. Serine 179 (acyl-ester intermediate) is an active-site residue.

This sequence belongs to the amidase family. GatA subfamily. Heterotrimer of A, B and C subunits.

It carries out the reaction L-glutamyl-tRNA(Gln) + L-glutamine + ATP + H2O = L-glutaminyl-tRNA(Gln) + L-glutamate + ADP + phosphate + H(+). Allows the formation of correctly charged Gln-tRNA(Gln) through the transamidation of misacylated Glu-tRNA(Gln) in organisms which lack glutaminyl-tRNA synthetase. The reaction takes place in the presence of glutamine and ATP through an activated gamma-phospho-Glu-tRNA(Gln). In Cupriavidus metallidurans (strain ATCC 43123 / DSM 2839 / NBRC 102507 / CH34) (Ralstonia metallidurans), this protein is Glutamyl-tRNA(Gln) amidotransferase subunit A.